We begin with the raw amino-acid sequence, 130 residues long: Organic solute transporter subunit beta (130 aa).

Residues 1 to 35 (MNYSEKLTGAPPMTEVPLELLEEMLWFFRVEDATP) lie on the Extracellular side of the membrane. The chain crosses the membrane as a helical span at residues 36 to 56 (WNCSMFVLAALVAIISFILLG). Topologically, residues 57–130 (RNIQANRNQK…HLPDPQEPES (74 aa)) are cytoplasmic. Residues 99–130 (LSEKPTLAQGEMEAKCSDVPRVHLPDPQEPES) form a disordered region. Over residues 110 to 124 (MEAKCSDVPRVHLPD) the composition is skewed to basic and acidic residues.

The protein belongs to the OST-beta family. Interacts with SLC51A. The Ost-alpha/Ost-beta complex is a heterodimer composed of alpha (SLC51A) and beta (SLC51B) subunit; induces the transport of SLC51A from the endoplasmic reticulum to the plasma membrane.

It is found in the cell membrane. The catalysed reaction is taurocholate(out) = taurocholate(in). It catalyses the reaction estrone 3-sulfate(out) = estrone 3-sulfate(in). The enzyme catalyses dehydroepiandrosterone 3-sulfate(out) = dehydroepiandrosterone 3-sulfate(in). It carries out the reaction tauroursodeoxycholate(out) = tauroursodeoxycholate(in). The catalysed reaction is glycoursodeoxycholate(out) = glycoursodeoxycholate(in). It catalyses the reaction glycocholate(out) = glycocholate(in). The enzyme catalyses taurochenodeoxycholate(out) = taurochenodeoxycholate(in). It carries out the reaction glycochenodeoxycholate(out) = glycochenodeoxycholate(in). The catalysed reaction is taurodeoxycholate(out) = taurodeoxycholate(in). It catalyses the reaction glycodeoxycholate(out) = glycodeoxycholate(in). The enzyme catalyses prostaglandin E2(out) = prostaglandin E2(in). Functionally, essential component of the Ost-alpha/Ost-beta complex, a heterodimer that acts as the intestinal basolateral transporter responsible for bile acid export from enterocytes into portal blood. The Ost-alpha/Ost-beta complex efficiently transports the major species of bile acids (taurocholate). Taurine conjugates are transported more efficiently across the basolateral membrane than glycine-conjugated bile acids. Can also transport steroids such as estrone 3-sulfate and dehydroepiandrosterone 3-sulfate, therefore playing a role in the enterohepatic circulation of sterols. Able to transport eicosanoids such as prostaglandin E2. Modulates SLC51A glycosylation, membrane trafficking and stability activities. The protein is Organic solute transporter subunit beta (SLC51B) of Bos taurus (Bovine).